Consider the following 274-residue polypeptide: MAVVKVKPTSPGRRGVVKIVHKHLHKGKPEASLLEPQMQNAGRNNNGHITVRHKGGGHKHHYRVVDFRRNKDGIPAKVERIEYDPNRTAHIALICYADGERSYIIAPRGLEAGQTVLNGAEAPIKAGNTLPIRNIPVGSTIHCVEMMPGKGAQIARSAGTSVTLMAREGIYAQVRLRSGEVRKIHIDCRATIGEVSNEEHNLRQYGKAGAKRWLGIRPTVRGVAMNPVDHPHGGGEGRTGEGQAPVSPWNTLTKGYRTRNNKRTQTFIVSRRKK.

A disordered region spans residues 224-254 (AMNPVDHPHGGGEGRTGEGQAPVSPWNTLTK). The segment covering 229–239 (DHPHGGGEGRT) has biased composition (basic and acidic residues).

This sequence belongs to the universal ribosomal protein uL2 family. As to quaternary structure, part of the 50S ribosomal subunit. Forms a bridge to the 30S subunit in the 70S ribosome.

One of the primary rRNA binding proteins. Required for association of the 30S and 50S subunits to form the 70S ribosome, for tRNA binding and peptide bond formation. It has been suggested to have peptidyltransferase activity; this is somewhat controversial. Makes several contacts with the 16S rRNA in the 70S ribosome. The sequence is that of Large ribosomal subunit protein uL2 from Leptothrix cholodnii (strain ATCC 51168 / LMG 8142 / SP-6) (Leptothrix discophora (strain SP-6)).